Consider the following 737-residue polypeptide: Phosphoribosylformylglycinamidine synthase subunit PurL (737 aa).

His50 is a catalytic residue. ATP is bound by residues Tyr53 and Lys92. Glu94 lines the Mg(2+) pocket. Substrate contacts are provided by residues 95 to 98 (SHNH) and Arg117. The active-site Proton acceptor is His96. Residue Asp118 participates in Mg(2+) binding. Gln241 serves as a coordination point for substrate. Mg(2+) is bound at residue Asp269. 313 to 315 (ESQ) provides a ligand contact to substrate. The ATP site is built by Asp495 and Gly532. Asn533 serves as a coordination point for Mg(2+). Position 535 (Ser535) interacts with substrate.

It belongs to the FGAMS family. In terms of assembly, monomer. Part of the FGAM synthase complex composed of 1 PurL, 1 PurQ and 2 PurS subunits.

The protein resides in the cytoplasm. It catalyses the reaction N(2)-formyl-N(1)-(5-phospho-beta-D-ribosyl)glycinamide + L-glutamine + ATP + H2O = 2-formamido-N(1)-(5-O-phospho-beta-D-ribosyl)acetamidine + L-glutamate + ADP + phosphate + H(+). It participates in purine metabolism; IMP biosynthesis via de novo pathway; 5-amino-1-(5-phospho-D-ribosyl)imidazole from N(2)-formyl-N(1)-(5-phospho-D-ribosyl)glycinamide: step 1/2. In terms of biological role, part of the phosphoribosylformylglycinamidine synthase complex involved in the purines biosynthetic pathway. Catalyzes the ATP-dependent conversion of formylglycinamide ribonucleotide (FGAR) and glutamine to yield formylglycinamidine ribonucleotide (FGAM) and glutamate. The FGAM synthase complex is composed of three subunits. PurQ produces an ammonia molecule by converting glutamine to glutamate. PurL transfers the ammonia molecule to FGAR to form FGAM in an ATP-dependent manner. PurS interacts with PurQ and PurL and is thought to assist in the transfer of the ammonia molecule from PurQ to PurL. This Bartonella bacilliformis (strain ATCC 35685 / KC583 / Herrer 020/F12,63) protein is Phosphoribosylformylglycinamidine synthase subunit PurL.